The chain runs to 362 residues: Peptide chain release factor 1 (362 aa).

N5-methylglutamine is present on Q237.

This sequence belongs to the prokaryotic/mitochondrial release factor family. Methylated by PrmC. Methylation increases the termination efficiency of RF1.

Its subcellular location is the cytoplasm. In terms of biological role, peptide chain release factor 1 directs the termination of translation in response to the peptide chain termination codons UAG and UAA. The protein is Peptide chain release factor 1 of Vibrio vulnificus (strain CMCP6).